Reading from the N-terminus, the 582-residue chain is Fructose-1,6-bisphosphatase class 3 (582 aa).

It belongs to the FBPase class 3 family. It depends on Mn(2+) as a cofactor.

The enzyme catalyses beta-D-fructose 1,6-bisphosphate + H2O = beta-D-fructose 6-phosphate + phosphate. It participates in carbohydrate biosynthesis; gluconeogenesis. The polypeptide is Fructose-1,6-bisphosphatase class 3 (Saccharophagus degradans (strain 2-40 / ATCC 43961 / DSM 17024)).